A 919-amino-acid polypeptide reads, in one-letter code: Probable dipeptidyl-aminopeptidase B (919 aa).

A compositionally biased stretch (basic and acidic residues) spans methionine 1 to threonine 10. The tract at residues methionine 1–glycine 53 is disordered. The Cytoplasmic portion of the chain corresponds to methionine 1 to arginine 92. Low complexity predominate over residues serine 21–serine 38. Residues isoleucine 93–leucine 113 form a helical; Signal-anchor for type II membrane protein membrane-spanning segment. Residues threonine 114–proline 919 are Vacuolar-facing. N-linked (GlcNAc...) asparagine glycans are attached at residues asparagine 200, asparagine 352, and asparagine 643. Serine 757 functions as the Charge relay system in the catalytic mechanism. An N-linked (GlcNAc...) asparagine glycan is attached at asparagine 811. Residues aspartate 834 and histidine 867 each act as charge relay system in the active site.

It belongs to the peptidase S9B family.

Its subcellular location is the vacuole membrane. The enzyme catalyses Release of an N-terminal dipeptide, Xaa-Yaa-|-Zaa-, from a polypeptide, preferentially when Yaa is Pro, provided Zaa is neither Pro nor hydroxyproline.. Its function is as follows. Type IV dipeptidyl-peptidase which removes N-terminal dipeptides sequentially from polypeptides having unsubstituted N-termini provided that the penultimate residue is proline. The chain is Probable dipeptidyl-aminopeptidase B (dapB) from Aspergillus fumigatus (strain CBS 144.89 / FGSC A1163 / CEA10) (Neosartorya fumigata).